We begin with the raw amino-acid sequence, 513 residues long: GMP synthase [glutamine-hydrolyzing] (513 aa).

Residues 7–198 (LIVVVDFGGQ…LFNIAGCRGD (192 aa)) enclose the Glutamine amidotransferase type-1 domain. Cys84 acts as the Nucleophile in catalysis. Catalysis depends on residues His172 and Glu174. Residues 199–388 (WTTESFITRQ…LGVPEEIVGR (190 aa)) form the GMPS ATP-PPase domain. 226–232 (SGGVDSS) lines the ATP pocket.

In terms of assembly, homodimer.

It catalyses the reaction XMP + L-glutamine + ATP + H2O = GMP + L-glutamate + AMP + diphosphate + 2 H(+). The protein operates within purine metabolism; GMP biosynthesis; GMP from XMP (L-Gln route): step 1/1. Catalyzes the synthesis of GMP from XMP. In Symbiobacterium thermophilum (strain DSM 24528 / JCM 14929 / IAM 14863 / T), this protein is GMP synthase [glutamine-hydrolyzing].